A 143-amino-acid polypeptide reads, in one-letter code: MVELKVVVSDPKTGRAYNVDASTGAAGAVVGKKIGDEVDAGPLGLAGYKILITGGSDQTGTPARKSLPGAGRRKLLLAEGVGFHPVMEGERKRKMIRAHQITPEFVQVNARVTAYGEKTLDELFPKVEGAEKKEKTKERKVRK.

The protein belongs to the eukaryotic ribosomal protein eS6 family.

This chain is Small ribosomal subunit protein eS6, found in Methanoregula boonei (strain DSM 21154 / JCM 14090 / 6A8).